Reading from the N-terminus, the 427-residue chain is Enolase (427 aa).

Gln-163 provides a ligand contact to (2R)-2-phosphoglycerate. The Proton donor role is filled by Glu-205. Residues Asp-242, Glu-285, and Asp-312 each contribute to the Mg(2+) site. (2R)-2-phosphoglycerate-binding residues include Lys-337, Arg-366, Ser-367, and Lys-388. Lys-337 serves as the catalytic Proton acceptor.

Belongs to the enolase family. The cofactor is Mg(2+).

The protein resides in the cytoplasm. The protein localises to the secreted. It localises to the cell surface. The enzyme catalyses (2R)-2-phosphoglycerate = phosphoenolpyruvate + H2O. Its pathway is carbohydrate degradation; glycolysis; pyruvate from D-glyceraldehyde 3-phosphate: step 4/5. Functionally, catalyzes the reversible conversion of 2-phosphoglycerate (2-PG) into phosphoenolpyruvate (PEP). It is essential for the degradation of carbohydrates via glycolysis. The polypeptide is Enolase (Bradyrhizobium sp. (strain BTAi1 / ATCC BAA-1182)).